The sequence spans 687 residues: Glycine--tRNA ligase beta subunit (687 aa).

The protein belongs to the class-II aminoacyl-tRNA synthetase family. In terms of assembly, tetramer of two alpha and two beta subunits.

Its subcellular location is the cytoplasm. The catalysed reaction is tRNA(Gly) + glycine + ATP = glycyl-tRNA(Gly) + AMP + diphosphate. This chain is Glycine--tRNA ligase beta subunit, found in Geobacter sp. (strain M21).